A 576-amino-acid polypeptide reads, in one-letter code: uncharacterized protein (576 aa).

The span at 241–261 (DNTKAPSPTNTAGSRELSTPA) shows a compositional bias: polar residues. The interval 241–270 (DNTKAPSPTNTAGSRELSTPAGSPGKASLP) is disordered.

This is an uncharacterized protein from Bacillus subtilis (strain 168).